The primary structure comprises 425 residues: Glucan 1,3-beta-glucosidase (425 aa).

An N-terminal signal peptide occupies residues 1-19; the sequence is MNLTLLLLALIFSPSLIFS. E219 (proton donor) is an active-site residue. Cystine bridges form between C301-C423 and C326-C352. E318 (nucleophile) is an active-site residue.

The protein belongs to the glycosyl hydrolase 5 (cellulase A) family.

It is found in the secreted. The enzyme catalyses Successive hydrolysis of beta-D-glucose units from the non-reducing ends of (1-&gt;3)-beta-D-glucans, releasing alpha-glucose.. Functionally, beta-glucanases participate in the metabolism of beta-glucan, the main structural component of the cell wall. It could also function biosynthetically as a transglycosylase. In Schwanniomyces occidentalis (Yeast), this protein is Glucan 1,3-beta-glucosidase.